The following is a 413-amino-acid chain: Transmembrane protein 237B (413 aa).

The tract at residues 1-162 (MDPEAKVSSS…EDDDVITDPQ (162 aa)) is disordered. Residues 112–122 (DLVSNGDTLDQ) show a composition bias toward polar residues. 4 helical membrane-spanning segments follow: residues 233 to 253 (VIGLFSHGFLAGYAVWNIIVV), 274 to 294 (LAYPAQSLLYLLLALSTVSAF), 312 to 332 (LSPVALASVFYFSALVLSLSQ), and 360 to 380 (ILYPWITVNLVVSLLVGLAWI).

It belongs to the TMEM237 family.

The protein localises to the membrane. The protein resides in the cell projection. It is found in the cilium. Its function is as follows. Component of the transition zone in primary cilia. Required for ciliogenesis. This chain is Transmembrane protein 237B (tmem237b), found in Danio rerio (Zebrafish).